The following is a 113-amino-acid chain: Large ribosomal subunit protein uL22 (113 aa).

This sequence belongs to the universal ribosomal protein uL22 family. Part of the 50S ribosomal subunit.

Functionally, this protein binds specifically to 23S rRNA; its binding is stimulated by other ribosomal proteins, e.g. L4, L17, and L20. It is important during the early stages of 50S assembly. It makes multiple contacts with different domains of the 23S rRNA in the assembled 50S subunit and ribosome. The globular domain of the protein is located near the polypeptide exit tunnel on the outside of the subunit, while an extended beta-hairpin is found that lines the wall of the exit tunnel in the center of the 70S ribosome. This chain is Large ribosomal subunit protein uL22, found in Geobacillus kaustophilus (strain HTA426).